The chain runs to 475 residues: Aspartyl/glutamyl-tRNA(Asn/Gln) amidotransferase subunit B (475 aa).

Belongs to the GatB/GatE family. GatB subfamily. Heterotrimer of A, B and C subunits.

It carries out the reaction L-glutamyl-tRNA(Gln) + L-glutamine + ATP + H2O = L-glutaminyl-tRNA(Gln) + L-glutamate + ADP + phosphate + H(+). The catalysed reaction is L-aspartyl-tRNA(Asn) + L-glutamine + ATP + H2O = L-asparaginyl-tRNA(Asn) + L-glutamate + ADP + phosphate + 2 H(+). Its function is as follows. Allows the formation of correctly charged Asn-tRNA(Asn) or Gln-tRNA(Gln) through the transamidation of misacylated Asp-tRNA(Asn) or Glu-tRNA(Gln) in organisms which lack either or both of asparaginyl-tRNA or glutaminyl-tRNA synthetases. The reaction takes place in the presence of glutamine and ATP through an activated phospho-Asp-tRNA(Asn) or phospho-Glu-tRNA(Gln). The polypeptide is Aspartyl/glutamyl-tRNA(Asn/Gln) amidotransferase subunit B (Bacillus mycoides (strain KBAB4) (Bacillus weihenstephanensis)).